A 418-amino-acid polypeptide reads, in one-letter code: MAQESVMFSDVSVDFSQEEWECLNDDQRDLYRDVMLENYSNLVSMGHSISKPNVISYLEQGKEPWLVDRELTRGQWPVLESRCETKKLFLKKEIYEIESTQWEIMEKLTRHDFQCSSFRDDWECNRQFKKELGSQGGHFNQLVFTHEDLPTLSHHPSFTLQQIINSKKKFCASKEYRKTFRHGSQFATHEIIHTTEKPYECKECGKSFRHPSRLTHHQKIHTGKKPFECKECGKTFICGSDLTRHHRIHTGEKPYECKECGKAFSSGSNFTRHQRIHTGEKPYECKECGKAFSSGSNFTQHQRIHTGEKPYECKECGNAFSQSSQLIKHQRIHTGEKPYECKECEKAFRSGSDLTRHQRIHTGEKPYECKICGKAYSQSSQLISHHRIHTSEKPYEYRECGKNFNYDPQLIQHQNLYW.

Residues 6–77 (VMFSDVSVDF…DRELTRGQWP (72 aa)) form the KRAB domain. The segment at 169-193 (KFCASKEYRKTFRHGSQFATHEIIH) adopts a C2H2-type 1; degenerate zinc-finger fold. C2H2-type zinc fingers lie at residues 199–221 (YECK…QKIH), 227–249 (FECK…HRIH), 255–277 (YECK…QRIH), 283–305 (YECK…QRIH), 311–333 (YECK…QRIH), 339–361 (YECK…QRIH), and 367–389 (YECK…HRIH). Residues lysine 314 and lysine 328 each participate in a glycyl lysine isopeptide (Lys-Gly) (interchain with G-Cter in SUMO2) cross-link.

Belongs to the krueppel C2H2-type zinc-finger protein family.

Its subcellular location is the nucleus. May be involved in transcriptional regulation. This chain is Zinc finger protein 566 (ZNF566), found in Pan troglodytes (Chimpanzee).